The sequence spans 435 residues: UPF0597 protein ASA_0240 (435 aa).

It belongs to the UPF0597 family.

The protein is UPF0597 protein ASA_0240 of Aeromonas salmonicida (strain A449).